A 241-amino-acid polypeptide reads, in one-letter code: UDP-2,3-diacylglucosamine hydrolase (241 aa).

Mn(2+)-binding residues include aspartate 9, histidine 11, aspartate 42, asparagine 79, and histidine 114. 79 to 80 (NR) is a substrate binding site. Residues aspartate 122, serine 160, asparagine 164, lysine 167, and histidine 195 each contribute to the substrate site. Mn(2+)-binding residues include histidine 195 and histidine 197.

It belongs to the LpxH family. Mn(2+) serves as cofactor.

The protein resides in the cell inner membrane. The enzyme catalyses UDP-2-N,3-O-bis[(3R)-3-hydroxytetradecanoyl]-alpha-D-glucosamine + H2O = 2-N,3-O-bis[(3R)-3-hydroxytetradecanoyl]-alpha-D-glucosaminyl 1-phosphate + UMP + 2 H(+). It functions in the pathway glycolipid biosynthesis; lipid IV(A) biosynthesis; lipid IV(A) from (3R)-3-hydroxytetradecanoyl-[acyl-carrier-protein] and UDP-N-acetyl-alpha-D-glucosamine: step 4/6. Its function is as follows. Hydrolyzes the pyrophosphate bond of UDP-2,3-diacylglucosamine to yield 2,3-diacylglucosamine 1-phosphate (lipid X) and UMP by catalyzing the attack of water at the alpha-P atom. Involved in the biosynthesis of lipid A, a phosphorylated glycolipid that anchors the lipopolysaccharide to the outer membrane of the cell. In Shewanella frigidimarina (strain NCIMB 400), this protein is UDP-2,3-diacylglucosamine hydrolase.